A 617-amino-acid polypeptide reads, in one-letter code: Dihydroxy-acid dehydratase (617 aa).

Asp-81 contacts Mg(2+). Cys-122 contributes to the [2Fe-2S] cluster binding site. Mg(2+)-binding residues include Asp-123 and Lys-124. Position 124 is an N6-carboxylysine (Lys-124). Cys-195 lines the [2Fe-2S] cluster pocket. A Mg(2+)-binding site is contributed by Glu-491. Ser-517 (proton acceptor) is an active-site residue.

This sequence belongs to the IlvD/Edd family. As to quaternary structure, homodimer. [2Fe-2S] cluster serves as cofactor. Mg(2+) is required as a cofactor.

It carries out the reaction (2R)-2,3-dihydroxy-3-methylbutanoate = 3-methyl-2-oxobutanoate + H2O. It catalyses the reaction (2R,3R)-2,3-dihydroxy-3-methylpentanoate = (S)-3-methyl-2-oxopentanoate + H2O. The protein operates within amino-acid biosynthesis; L-isoleucine biosynthesis; L-isoleucine from 2-oxobutanoate: step 3/4. It functions in the pathway amino-acid biosynthesis; L-valine biosynthesis; L-valine from pyruvate: step 3/4. Functions in the biosynthesis of branched-chain amino acids. Catalyzes the dehydration of (2R,3R)-2,3-dihydroxy-3-methylpentanoate (2,3-dihydroxy-3-methylvalerate) into 2-oxo-3-methylpentanoate (2-oxo-3-methylvalerate) and of (2R)-2,3-dihydroxy-3-methylbutanoate (2,3-dihydroxyisovalerate) into 2-oxo-3-methylbutanoate (2-oxoisovalerate), the penultimate precursor to L-isoleucine and L-valine, respectively. The protein is Dihydroxy-acid dehydratase of Buchnera aphidicola subsp. Acyrthosiphon pisum (strain 5A).